Reading from the N-terminus, the 115-residue chain is Thrombospondin type-1 domain-containing protein 8 (115 aa).

The signal sequence occupies residues 1 to 21; that stretch reads MARTPGALLLAPLLLLQLATP. The region spanning 53–104 is the TSP type-1 domain; it reads DSILGPWGKWRCLCDLGKQERSREVVGTAPGPVFMDPEKLIQLRPCRQRDCP.

This Homo sapiens (Human) protein is Thrombospondin type-1 domain-containing protein 8.